We begin with the raw amino-acid sequence, 734 residues long: MGIQGLLQFLKEASEPVHVKKYKGKTVAVDTYCWLHKGAFACAEKLAKGEPTDQYVQFCMKLVHMLLSFGVKPILVFDGCTLPSKKDVEKARREKRQTNLQKGKQLLREGKLAEARECFSRSVNITSSMAHEVIKAARSEGVDYIVAPYEADSQLAYLNKNDFAEAIITEDSDLLAFGCKKVLLKMDKFGNGLEIDQARFGMCRSLGDVFTEEKFRYMCILSGCDYLPSIHGIGLAKACKLLKVANNPDITKVIQKIGQYLKTNITVPEGYIEGFLRANNTFLYQLVFDPVERKLIPLNPYGNDVNPEELNYAGPNMGDSVALQIALGNMDINTRKQIDDYNPDIPQLSHHRSQSWDNKQLNRKTAHTDSIWYTKSEPCKTTKIEEIHSPRGLILPSKKHTVKRSYEDGVSDTDLISQYSFSKNKKARPDGDDPMQQVPASTMILQPLDDCANTKPKKPIHQPKTRNAFATFLQRQKQDCSSVSATGTRSRFFYKPADEKPHCTEKEQIVCNGSALDIAKETHELTEESSIKTEKEDSLSTISEVCKPNNQRISPLQNQRSCFTWSGSLDSESSPTPKQSPMLLSLQKFHRTTPYMQNEAENKPSWQSSCIKSDTVSQIDSNEKLLKKQDIEDTDSDEHASTPESPCQFTMKASPAHQSFFPEPKGSAPKSKVPGLLKSQSVVSGLRTKVKPRAPAKVSGLTNRSNTKATRNNENVPGLQATIGDLWKNFSYKK.

Residues 1–99 are N-domain; sequence MGIQGLLQFL…KARREKRQTN (99 aa). D30, D78, E150, D152, D171, D173, and D225 together coordinate Mg(2+). The tract at residues 138-229 is I-domain; sequence RSEGVDYIVA…ILSGCDYLPS (92 aa). 3 disordered regions span residues 599–650, 656–675, and 685–716; these read EAEN…CQFT, AHQS…KVPG, and GLRT…NENV. A compositionally biased stretch (polar residues) spans 604–620; that stretch reads PSWQSSCIKSDTVSQID. Basic and acidic residues predominate over residues 621-641; sequence SNEKLLKKQDIEDTDSDEHAS. The segment covering 700-715 has biased composition (polar residues); that stretch reads GLTNRSNTKATRNNEN.

This sequence belongs to the XPG/RAD2 endonuclease family. EXO1 subfamily. Mg(2+) serves as cofactor.

The protein resides in the nucleus. In terms of biological role, 5'-&gt;3' double-stranded DNA exonuclease which may also contain a cryptic 3'-&gt;5' double-stranded DNA exonuclease activity. Also exhibits endonuclease activity against 5'-overhanging flap structures similar to those generated by displacement synthesis when DNA polymerase encounters the 5'-end of a downstream Okazaki fragment. Required for DNA mismatch repair (MMR). In Xenopus laevis (African clawed frog), this protein is Exonuclease 1 (exo1).